Here is a 364-residue protein sequence, read N- to C-terminus: Chorismate synthase (364 aa).

Positions 41–60 (MQHDLDRRRPGTSRYTTARR) are disordered. The NADP(+) site is built by Arg48 and Arg54. Residues 125-127 (RSS), 238-239 (NA), Gly278, 293-297 (KPTSS), and Arg319 each bind FMN.

It belongs to the chorismate synthase family. In terms of assembly, homotetramer. Requires FMNH2 as cofactor.

It catalyses the reaction 5-O-(1-carboxyvinyl)-3-phosphoshikimate = chorismate + phosphate. The protein operates within metabolic intermediate biosynthesis; chorismate biosynthesis; chorismate from D-erythrose 4-phosphate and phosphoenolpyruvate: step 7/7. Functionally, catalyzes the anti-1,4-elimination of the C-3 phosphate and the C-6 proR hydrogen from 5-enolpyruvylshikimate-3-phosphate (EPSP) to yield chorismate, which is the branch point compound that serves as the starting substrate for the three terminal pathways of aromatic amino acid biosynthesis. This reaction introduces a second double bond into the aromatic ring system. This chain is Chorismate synthase, found in Shewanella sp. (strain ANA-3).